Consider the following 252-residue polypeptide: Adenosine 5'-phosphosulfate reductase (252 aa).

[4Fe-4S] cluster-binding residues include C125, C126, C208, and C211. A disordered region spans residues 219-252 (DGYSREGRWSDRDKTECGLHTSPEDEDGAHAAES). The segment covering 221–235 (YSREGRWSDRDKTEC) has biased composition (basic and acidic residues). The active-site Nucleophile; cysteine thiosulfonate intermediate is C235.

This sequence belongs to the PAPS reductase family. CysH subfamily. Requires [4Fe-4S] cluster as cofactor.

It localises to the cytoplasm. The catalysed reaction is [thioredoxin]-disulfide + sulfite + AMP + 2 H(+) = adenosine 5'-phosphosulfate + [thioredoxin]-dithiol. Its pathway is sulfur metabolism; hydrogen sulfide biosynthesis; sulfite from sulfate. Functionally, catalyzes the formation of sulfite from adenosine 5'-phosphosulfate (APS) using thioredoxin as an electron donor. This chain is Adenosine 5'-phosphosulfate reductase, found in Salinibacter ruber (strain DSM 13855 / M31).